A 222-amino-acid chain; its full sequence is 7-cyano-7-deazaguanine synthase (222 aa).

14–24 contributes to the ATP binding site; sequence FSGGQDSTTCL. Residues Cys-192, Cys-201, Cys-204, and Cys-207 each contribute to the Zn(2+) site.

The protein belongs to the QueC family. Homodimer. It depends on Zn(2+) as a cofactor.

It catalyses the reaction 7-carboxy-7-deazaguanine + NH4(+) + ATP = 7-cyano-7-deazaguanine + ADP + phosphate + H2O + H(+). It participates in purine metabolism; 7-cyano-7-deazaguanine biosynthesis. In terms of biological role, catalyzes the ATP-dependent conversion of 7-carboxy-7-deazaguanine (CDG) to 7-cyano-7-deazaguanine (preQ(0)). In Clostridium acetobutylicum (strain ATCC 824 / DSM 792 / JCM 1419 / IAM 19013 / LMG 5710 / NBRC 13948 / NRRL B-527 / VKM B-1787 / 2291 / W), this protein is 7-cyano-7-deazaguanine synthase.